The primary structure comprises 277 residues: Large ribosomal subunit protein uL2 (277 aa).

The segment at Gly222–Thr259 is disordered.

It belongs to the universal ribosomal protein uL2 family. Part of the 50S ribosomal subunit. Forms a bridge to the 30S subunit in the 70S ribosome.

Functionally, one of the primary rRNA binding proteins. Required for association of the 30S and 50S subunits to form the 70S ribosome, for tRNA binding and peptide bond formation. It has been suggested to have peptidyltransferase activity; this is somewhat controversial. Makes several contacts with the 16S rRNA in the 70S ribosome. In Clostridium beijerinckii (strain ATCC 51743 / NCIMB 8052) (Clostridium acetobutylicum), this protein is Large ribosomal subunit protein uL2.